Here is a 235-residue protein sequence, read N- to C-terminus: Sugar fermentation stimulation protein homolog (235 aa).

Belongs to the SfsA family.

This Aliivibrio fischeri (strain ATCC 700601 / ES114) (Vibrio fischeri) protein is Sugar fermentation stimulation protein homolog.